Reading from the N-terminus, the 551-residue chain is Glucans biosynthesis protein D (551 aa).

The tat-type signal signal peptide spans 1–32; the sequence is MDRRRFIKGSMAMAAVCGTSGIASLFSQAAFA.

Belongs to the OpgD/OpgG family. Post-translationally, predicted to be exported by the Tat system. The position of the signal peptide cleavage has not been experimentally proven.

It localises to the periplasm. Its pathway is glycan metabolism; osmoregulated periplasmic glucan (OPG) biosynthesis. Functionally, probably involved in the control of the structural glucose backbone of osmoregulated periplasmic glucans (OPGs). The chain is Glucans biosynthesis protein D from Escherichia coli (strain K12 / MC4100 / BW2952).